Here is a 953-residue protein sequence, read N- to C-terminus: GATA zinc finger domain-containing protein 14 (953 aa).

Over residues Met-1 to Tyr-21 the composition is skewed to polar residues. Disordered stretches follow at residues Met-1–Arg-109 and Thr-216–Gln-756. The span at Asn-22 to Pro-89 shows a compositional bias: low complexity. The span at Asn-90 to Arg-109 shows a compositional bias: polar residues. Low complexity-rich tracts occupy residues Ser-219–Asn-330, Asn-342–Ser-683, and Gly-690–Gln-756. Residues Cys-893–Cys-918 form a GATA-type zinc finger. Residues Lys-934–Asn-953 form a disordered region.

This chain is GATA zinc finger domain-containing protein 14 (gtaN), found in Dictyostelium discoideum (Social amoeba).